The primary structure comprises 381 residues: MSKPAILALEDGSVFHGTAIGADGQTSGEVVFNTAMTGYQEILTDPSYSRQIVTLTYPHIGNTGVNSEDVESSSIAAAGLVIRDLPLLASSFRCEQSLSDYLAQQNVLGIADMHTRRLTRLLRDKGSQNGAILAGPDAEGEDAEARALEAARAFPGLKGMDLAKVVSCAEPYEWSEGEWTLGSGYADVSQGDRPYHVVAYDYGMKRNILRMLAARGCRLTVVPAQTPAEEVLAMNPDGIFLSNGPGDPEPCDYAISAIQAFLETEIPVFGICLGHQLLALASGAQTVKMNHGHHGANHPVQDLDSGRVMITSQNHGFAVEESTLPDNLRAIHRSLFDGTLQGIERTDRPAFSFQGHPEASPGPRDVAPLFDRFVEMMRHRR.

Positions 1-192 are CPSase; that stretch reads MSKPAILALE…SGYADVSQGD (192 aa). Ser-47, Gly-244, and Gly-246 together coordinate L-glutamine. Residues 196 to 381 enclose the Glutamine amidotransferase type-1 domain; the sequence is HVVAYDYGMK…RFVEMMRHRR (186 aa). The active-site Nucleophile is Cys-272. 5 residues coordinate L-glutamine: Leu-273, Gln-276, Asn-314, Gly-316, and Phe-317. Residues His-356 and Glu-358 contribute to the active site.

The protein belongs to the CarA family. Composed of two chains; the small (or glutamine) chain promotes the hydrolysis of glutamine to ammonia, which is used by the large (or ammonia) chain to synthesize carbamoyl phosphate. Tetramer of heterodimers (alpha,beta)4.

The enzyme catalyses hydrogencarbonate + L-glutamine + 2 ATP + H2O = carbamoyl phosphate + L-glutamate + 2 ADP + phosphate + 2 H(+). It carries out the reaction L-glutamine + H2O = L-glutamate + NH4(+). Its pathway is amino-acid biosynthesis; L-arginine biosynthesis; carbamoyl phosphate from bicarbonate: step 1/1. It participates in pyrimidine metabolism; UMP biosynthesis via de novo pathway; (S)-dihydroorotate from bicarbonate: step 1/3. Its function is as follows. Small subunit of the glutamine-dependent carbamoyl phosphate synthetase (CPSase). CPSase catalyzes the formation of carbamoyl phosphate from the ammonia moiety of glutamine, carbonate, and phosphate donated by ATP, constituting the first step of 2 biosynthetic pathways, one leading to arginine and/or urea and the other to pyrimidine nucleotides. The small subunit (glutamine amidotransferase) binds and cleaves glutamine to supply the large subunit with the substrate ammonia. In Halomonas eurihalina, this protein is Carbamoyl phosphate synthase small chain.